The sequence spans 303 residues: PDRRPPEDPITPPPPTKEEQRAGCGWRNENGVGFRIIGDKDGEAKFGEFPWMVAILKIEPVNDQDPEGQKLNVYVGGGSLIHPQVVLTAAHYVATAKTLRVRAGEWDTQTTKEIYPYQDRDVTHKEIHKDFNKGNLFYDIALLFLSQPMEMAPNVGVVCLPPRNERAEAGTRCFASGWGKDKFGKEGRYQVILKKVEVPVVDRNTCQDQLRKTRLGRHFMLHSSFMCAGGEPGRDTCRGDGGSPLVCPIQYEKGRYVQSGIVAWGIGCGEDRTPGVYVDVGNLRDWIDDKVAGRGIEPTVYTY.

The disordered stretch occupies residues 1–24 (PDRRPPEDPITPPPPTKEEQRAGC). The 257-residue stretch at 36–292 (IIGDKDGEAK…LRDWIDDKVA (257 aa)) folds into the Peptidase S1 domain. Cystine bridges form between Cys173-Cys247, Cys206-Cys227, and Cys237-Cys268.

It belongs to the peptidase S1 family. Heterodimer.

It localises to the secreted. In terms of biological role, binds and activates processed prophenoloxidases PPO1 and PPO2 and thus is involved in the activation of the prophenoloxidase cascade probably following the recognition of pathogen-derived products. Binds the A.niger cell wall component alpha-1,3-glucan, a fungal pathogen-associated molecular pattern (PAMP) that activates the host immune response. This Galleria mellonella (Greater wax moth) protein is Phenoloxidase-activating factor 2 (LOC113510063).